The sequence spans 361 residues: Transmembrane protein 116 (361 aa).

The next 7 membrane-spanning stretches (helical) occupy residues 29–49, 64–84, 103–123, 147–167, 210–230, 261–281, and 295–315; these read WIQM…ILYA, FLLS…GLLF, TLYM…YTGL, LGPV…FVAG, CMAI…IFMG, MVLY…LATM, and VALY…NCLV.

It localises to the membrane. The sequence is that of Transmembrane protein 116 (tmem116) from Danio rerio (Zebrafish).